Consider the following 265-residue polypeptide: MNKDVSLGQPIVRYEDGKLFNTTDQYVTEFPLTIMVNGEEFATVICSPTNLEELVIGFLASEGAILKRDELKSVLIDDSKGFAHVELNKDLGDRFQYSTKRMIASCCGKSREFYFQNDAAIAKTSMSKITLTPIQIINMMTRLQSASHIYQETGGLHNAAISDGLTFFVHRQDIGRHNALDKLYGFCIQRHITVRDKVLIFSGRISSEILIKAAKIGVGVILSKSAPTTLAVTLANDLNITAVGFIRNGGFNIYSHPERIIDSEQ.

Residue Cys-107 is the Cysteine persulfide intermediate of the active site.

Belongs to the FdhD family.

It is found in the cytoplasm. Its function is as follows. Required for formate dehydrogenase (FDH) activity. Acts as a sulfur carrier protein that transfers sulfur from IscS to the molybdenum cofactor prior to its insertion into FDH. The protein is Sulfur carrier protein FdhD of Staphylococcus aureus (strain JH9).